Consider the following 607-residue polypeptide: Probable CoA ligase CCL8 (607 aa).

ATP is bound by residues 236–244, 391–396, aspartate 474, 486–489, and lysine 591; these read TSGTTGKPK, ERYGMT, and ILGR. Positions 305-391 are SBD1; the sequence is SVRGIWQRWR…QTITGHRLLE (87 aa). Residues 392 to 453 form an SBD2 region; sequence RYGMTEFVMA…VRSPSLFKEY (62 aa).

Belongs to the ATP-dependent AMP-binding enzyme family. In terms of tissue distribution, mostly expressed at low levels in glandular trichomes (lupulin glands) after flowering, and, to a lower extent, in stems, leaves, flowers and cones.

It localises to the cytoplasm. The protein localises to the cytosol. The polypeptide is Probable CoA ligase CCL8 (Humulus lupulus (European hop)).